A 700-amino-acid chain; its full sequence is Ribonucleoside-diphosphate reductase subunit alpha (700 aa).

Residues Thr153, 169–170 (SC), Gly198, 380–384 (NLCSE), and 580–584 (PTGSI) contribute to the substrate site. Cys170 and Cys409 form a disulfide bridge. Catalysis depends on Asn380, which acts as the Proton acceptor. Cys382 acts as the Cysteine radical intermediate in catalysis. Glu384 acts as the Proton acceptor in catalysis.

It belongs to the ribonucleoside diphosphate reductase large chain family. Tetramer of two alpha and two beta subunits.

It carries out the reaction a 2'-deoxyribonucleoside 5'-diphosphate + [thioredoxin]-disulfide + H2O = a ribonucleoside 5'-diphosphate + [thioredoxin]-dithiol. Its activity is regulated as follows. Under complex allosteric control mediated by deoxynucleoside triphosphates and ATP binding. The type of nucleotide bound at the specificity site determines substrate preference. It seems probable that ATP makes the enzyme reduce CDP and UDP, dGTP favors ADP reduction and dTTP favors GDP reduction. Functionally, provides the precursors necessary for DNA synthesis. Catalyzes the biosynthesis of deoxyribonucleotides from the corresponding ribonucleotides. The polypeptide is Ribonucleoside-diphosphate reductase subunit alpha (Bacillus subtilis (strain 168)).